The sequence spans 919 residues: Beta-galactosidase 15 (919 aa).

Positions 1–31 (MAASRGPPLLGFRALALALLLAILLLLGCSA) are cleaved as a signal peptide. N63 carries N-linked (GlcNAc...) asparagine glycosylation. The active-site Proton donor is the E220. E289 (nucleophile) is an active-site residue. N-linked (GlcNAc...) asparagine glycans are attached at residues N412, N530, N546, and N855. One can recognise an SUEL-type lectin domain in the interval 822–907 (NAATPELRLQ…KDLAVEAKCS (86 aa)).

The protein belongs to the glycosyl hydrolase 35 family.

It is found in the secreted. The protein resides in the extracellular space. The protein localises to the apoplast. The enzyme catalyses Hydrolysis of terminal non-reducing beta-D-galactose residues in beta-D-galactosides.. In Oryza sativa subsp. japonica (Rice), this protein is Beta-galactosidase 15.